The sequence spans 337 residues: Holliday junction branch migration complex subunit RuvB (337 aa).

Residues 4-186 (ADRLIHPQII…FGIPLRLEFY (183 aa)) form a large ATPase domain (RuvB-L) region. ATP-binding positions include Arg-26, Gly-67, Lys-70, Thr-71, Thr-72, 133–135 (EDY), Arg-176, Tyr-186, and Arg-223. Thr-71 provides a ligand contact to Mg(2+). The segment at 187 to 257 (NVKDLSSIVA…IAEAALDMLD (71 aa)) is small ATPAse domain (RuvB-S). The head domain (RuvB-H) stretch occupies residues 260–337 (AEGFDYMDRK…NHFNIIKPDA (78 aa)). The DNA site is built by Arg-296, Arg-315, and Arg-320.

Belongs to the RuvB family. In terms of assembly, homohexamer. Forms an RuvA(8)-RuvB(12)-Holliday junction (HJ) complex. HJ DNA is sandwiched between 2 RuvA tetramers; dsDNA enters through RuvA and exits via RuvB. An RuvB hexamer assembles on each DNA strand where it exits the tetramer. Each RuvB hexamer is contacted by two RuvA subunits (via domain III) on 2 adjacent RuvB subunits; this complex drives branch migration. In the full resolvosome a probable DNA-RuvA(4)-RuvB(12)-RuvC(2) complex forms which resolves the HJ.

Its subcellular location is the cytoplasm. The catalysed reaction is ATP + H2O = ADP + phosphate + H(+). The RuvA-RuvB-RuvC complex processes Holliday junction (HJ) DNA during genetic recombination and DNA repair, while the RuvA-RuvB complex plays an important role in the rescue of blocked DNA replication forks via replication fork reversal (RFR). RuvA specifically binds to HJ cruciform DNA, conferring on it an open structure. The RuvB hexamer acts as an ATP-dependent pump, pulling dsDNA into and through the RuvAB complex. RuvB forms 2 homohexamers on either side of HJ DNA bound by 1 or 2 RuvA tetramers; 4 subunits per hexamer contact DNA at a time. Coordinated motions by a converter formed by DNA-disengaged RuvB subunits stimulates ATP hydrolysis and nucleotide exchange. Immobilization of the converter enables RuvB to convert the ATP-contained energy into a lever motion, pulling 2 nucleotides of DNA out of the RuvA tetramer per ATP hydrolyzed, thus driving DNA branch migration. The RuvB motors rotate together with the DNA substrate, which together with the progressing nucleotide cycle form the mechanistic basis for DNA recombination by continuous HJ branch migration. Branch migration allows RuvC to scan DNA until it finds its consensus sequence, where it cleaves and resolves cruciform DNA. The sequence is that of Holliday junction branch migration complex subunit RuvB from Shewanella halifaxensis (strain HAW-EB4).